The following is a 138-amino-acid chain: Phosphoribosyl-AMP cyclohydrolase (138 aa).

Residue D84 participates in Mg(2+) binding. Zn(2+) is bound at residue C85. Mg(2+) is bound by residues D86 and D88. Residues C102 and C109 each contribute to the Zn(2+) site.

This sequence belongs to the PRA-CH family. Homodimer. The cofactor is Mg(2+). Zn(2+) serves as cofactor.

Its subcellular location is the cytoplasm. The enzyme catalyses 1-(5-phospho-beta-D-ribosyl)-5'-AMP + H2O = 1-(5-phospho-beta-D-ribosyl)-5-[(5-phospho-beta-D-ribosylamino)methylideneamino]imidazole-4-carboxamide. The protein operates within amino-acid biosynthesis; L-histidine biosynthesis; L-histidine from 5-phospho-alpha-D-ribose 1-diphosphate: step 3/9. In terms of biological role, catalyzes the hydrolysis of the adenine ring of phosphoribosyl-AMP. This is Phosphoribosyl-AMP cyclohydrolase from Burkholderia vietnamiensis (strain G4 / LMG 22486) (Burkholderia cepacia (strain R1808)).